The primary structure comprises 406 residues: 1-deoxy-D-xylulose 5-phosphate reductoisomerase (406 aa).

The NADPH site is built by threonine 21, glycine 22, serine 23, isoleucine 24, glycine 47, glutamine 50, and asparagine 127. Lysine 128 is a 1-deoxy-D-xylulose 5-phosphate binding site. Glutamate 129 serves as a coordination point for NADPH. Residue aspartate 151 participates in Mn(2+) binding. Serine 152, glutamate 153, serine 177, and histidine 200 together coordinate 1-deoxy-D-xylulose 5-phosphate. Residue glutamate 153 coordinates Mn(2+). An NADPH-binding site is contributed by glycine 206. The 1-deoxy-D-xylulose 5-phosphate site is built by serine 213, asparagine 218, lysine 219, and glutamate 222. A Mn(2+)-binding site is contributed by glutamate 222.

It belongs to the DXR family. It depends on Mg(2+) as a cofactor. Mn(2+) is required as a cofactor.

The catalysed reaction is 2-C-methyl-D-erythritol 4-phosphate + NADP(+) = 1-deoxy-D-xylulose 5-phosphate + NADPH + H(+). Its pathway is isoprenoid biosynthesis; isopentenyl diphosphate biosynthesis via DXP pathway; isopentenyl diphosphate from 1-deoxy-D-xylulose 5-phosphate: step 1/6. Functionally, catalyzes the NADPH-dependent rearrangement and reduction of 1-deoxy-D-xylulose-5-phosphate (DXP) to 2-C-methyl-D-erythritol 4-phosphate (MEP). This Mycobacterium leprae (strain Br4923) protein is 1-deoxy-D-xylulose 5-phosphate reductoisomerase.